A 131-amino-acid chain; its full sequence is Small ribosomal subunit protein uS8 (131 aa).

It belongs to the universal ribosomal protein uS8 family. As to quaternary structure, part of the 30S ribosomal subunit. Contacts proteins S5 and S12.

Its function is as follows. One of the primary rRNA binding proteins, it binds directly to 16S rRNA central domain where it helps coordinate assembly of the platform of the 30S subunit. In Chlorobium phaeobacteroides (strain DSM 266 / SMG 266 / 2430), this protein is Small ribosomal subunit protein uS8.